The primary structure comprises 312 residues: MEDNKHWIEKLFPPHFTVQDFFSQSFEPEQLISEKISKEKVKNVEKMYHNAAERCLEAGKWKRKEELSNIFSYDPNIPDDQKEKEPPVGNLHDNVTCPIAAHVDDQCIWRENELKVLRHEMQQRYSEGAKFKNQLDACKLELSELKAKDKNTEQELGKAKEALTLSKTHIRNKGILVKQLQKDKLQKDSEIQSLKKDLHEKSVMINSLNKNLCIAGEEIQELKLKSKDLEQELITVKQQQGVKEGTLIENLKRNYILEKNKLLREIENLKEEERKREKTHSLNLAALDLLRKHFSSQSINTSTEVIQLKIVH.

Residues 126–281 (SEGAKFKNQL…EERKREKTHS (156 aa)) are a coiled coil.

This sequence belongs to the CCDC160 family.

The polypeptide is Coiled-coil domain-containing protein 160 homolog (Xenopus tropicalis (Western clawed frog)).